Consider the following 436-residue polypeptide: Serine/threonine-protein kinase STK11 (436 aa).

Position 31 is a phosphoserine (S31). K44 and K48 each carry N6-acetyllysine. The interval 45-90 (LIGKYLMGDLLGEGSYGKVKEVLDSETLCRRAVKILKKKKLRRIPN) is sufficient for interaction with SIRT1. One can recognise a Protein kinase domain in the interval 49–309 (YLMGDLLGEG…IRQIRQHSWF (261 aa)). ATP-binding positions include 55-63 (LGEGSYGKV) and K78. K96 and K97 each carry N6-acetyllysine. D176 serves as the catalytic Proton acceptor. The residue at position 189 (T189) is a Phosphothreonine; by autocatalysis. N6-acetyllysine occurs at positions 296 and 311. Phosphoserine is present on S325. T336 bears the Phosphothreonine; by autocatalysis mark. Position 366 is a phosphothreonine; by ATM and autocatalysis (T366). The disordered stretch occupies residues 398-421 (TEPQLSSKVKPEGRPGTANPARKV). S403 is modified (phosphoserine). At K420 the chain carries N6-acetyllysine. Residue C422 is the site of S-palmitoyl cysteine attachment. An N6-acetyllysine modification is found at K426. The residue at position 431 (S431) is a Phosphoserine; by autocatalysis, PKA, PKC/PRKCZ and RPS6KA1. C433 is subject to Cysteine methyl ester. C433 carries the S-farnesyl cysteine lipid modification. K434 carries the post-translational modification N6-acetyllysine. Positions 434–436 (KQQ) are cleaved as a propeptide — removed in mature form.

Belongs to the protein kinase superfamily. CAMK Ser/Thr protein kinase family. LKB1 subfamily. Catalytic component of a trimeric complex composed of STK11/LKB1, STRAD (STRADA or STRADB) and CAB39/MO25 (CAB39/MO25alpha or CAB39L/MO25beta): the complex tethers STK11/LKB1 in the cytoplasm and stimulates its catalytic activity. Found in a ternary complex composed of SMAD4, STK11/LKB1 and STK11IP. Interacts with p53/TP53, SMAD4, STK11IP and WDR6. Interacts with NR4A1. Interacts with NISCH; this interaction may increase STK11 activity. Interacts with PTEN, leading to PTEN phosphorylation. Interacts with SIRT1; the interaction deacetylates STK11. Interacts with CDKN1A. Mg(2+) serves as cofactor. It depends on Mn(2+) as a cofactor. In terms of processing, phosphorylated by ATM at Thr-366 following ionizing radiation (IR). Phosphorylation at Ser-431 by RPS6KA1 and/or some PKA is required to inhibit cell growth. Phosphorylation at Ser-431 is also required during neuronal polarization to mediate phosphorylation of BRSK1 and BRSK2. Phosphorylation by PKC/PRKCZ at Ser-399 in isoform 2 promotes metformin (or peroxynitrite)-induced nuclear export of STK11 and activation of AMPK. UV radiation-induced phosphorylation at Thr-366 mediates CDKN1A degradation. Post-translationally, acetylated. Deacetylation at Lys-48 enhances cytoplasmic localization and kinase activity in vitro. In terms of tissue distribution, widely expressed. As to expression, predominantly expressed in testis (at protein level). Expressed in adult brain and liver and absent from tissues derived from postnatal day 7.

It localises to the nucleus. It is found in the cytoplasm. The protein resides in the membrane. Its subcellular location is the mitochondrion. The enzyme catalyses L-seryl-[protein] + ATP = O-phospho-L-seryl-[protein] + ADP + H(+). The catalysed reaction is L-threonyl-[protein] + ATP = O-phospho-L-threonyl-[protein] + ADP + H(+). Activated by forming a complex with STRAD (STRADA or STRADB) and CAB39/MO25 (CAB39/MO25alpha or CAB39L/MO25beta): STRADA (or STRADB)-binding promotes a conformational change of STK11/LKB1 in an active conformation, which is stabilized by CAB39/MO25alpha (or CAB39L/MO25beta) interacting with the STK11/LKB1 activation loop. Sequestration in the nucleus by NR4A1 prevents it from phosphorylating and activating cytoplasmic AMPK. Its function is as follows. Tumor suppressor serine/threonine-protein kinase that controls the activity of AMP-activated protein kinase (AMPK) family members, thereby playing a role in various processes such as cell metabolism, cell polarity, apoptosis and DNA damage response. Acts by phosphorylating the T-loop of AMPK family proteins, thus promoting their activity: phosphorylates PRKAA1, PRKAA2, BRSK1, BRSK2, MARK1, MARK2, MARK3, MARK4, NUAK1, NUAK2, SIK1, SIK2, SIK3 and SNRK but not MELK. Also phosphorylates non-AMPK family proteins such as STRADA, PTEN and possibly p53/TP53. Acts as a key upstream regulator of AMPK by mediating phosphorylation and activation of AMPK catalytic subunits PRKAA1 and PRKAA2 and thereby regulates processes including: inhibition of signaling pathways that promote cell growth and proliferation when energy levels are low, glucose homeostasis in liver, activation of autophagy when cells undergo nutrient deprivation, and B-cell differentiation in the germinal center in response to DNA damage. Also acts as a regulator of cellular polarity by remodeling the actin cytoskeleton. Required for cortical neuron polarization by mediating phosphorylation and activation of BRSK1 and BRSK2, leading to axon initiation and specification. Involved in DNA damage response: interacts with p53/TP53 and recruited to the CDKN1A/WAF1 promoter to participate in transcription activation. Able to phosphorylate p53/TP53; the relevance of such result in vivo is however unclear and phosphorylation may be indirect and mediated by downstream STK11/LKB1 kinase NUAK1. Also acts as a mediator of p53/TP53-dependent apoptosis via interaction with p53/TP53: translocates to the mitochondrion during apoptosis and regulates p53/TP53-dependent apoptosis pathways. Regulates UV radiation-induced DNA damage response mediated by CDKN1A. In association with NUAK1, phosphorylates CDKN1A in response to UV radiation and contributes to its degradation which is necessary for optimal DNA repair. Has a role in spermiogenesis. The chain is Serine/threonine-protein kinase STK11 from Mus musculus (Mouse).